Here is a 91-residue protein sequence, read N- to C-terminus: Probable Thioredoxin (91 aa).

In terms of domain architecture, Glutaredoxin spans 1–91 (MVMMKLFTSP…LKGGEEYGAS (91 aa)). Residues C12 and C15 are joined by a disulfide bond.

This sequence belongs to the glutaredoxin family.

The protein localises to the cytoplasm. In terms of biological role, acts to maintain redox homeostasis; functions as a protein disulfide reductase. This chain is Probable Thioredoxin, found in Archaeoglobus fulgidus (strain ATCC 49558 / DSM 4304 / JCM 9628 / NBRC 100126 / VC-16).